A 588-amino-acid polypeptide reads, in one-letter code: Calicin (588 aa).

Residues 28 to 98 (WDIALTVDHH…FYSGKVVISE (71 aa)) form the BTB domain. Phosphoserine is present on Ser149. Kelch repeat units lie at residues 280–327 (SVVI…SAGR), 328–375 (YIYI…TCGG), 377–423 (VYSV…TRGD), 425–475 (NLYI…SFHQ), 476–525 (DNIL…VGDN), and 526–580 (KVFV…LAKL).

In terms of assembly, interacts with CYLC1; the interaction may be relevant for proper acrosome attachment to the nuclear envelope. Expressed in testis and in spermatozoa (at protein level).

The protein localises to the cytoplasm. The protein resides in the cytoskeleton. Its subcellular location is the perinuclear theca. It is found in the calyx. In terms of biological role, required for both nuclear and acrosomal shaping during spermiogenesis. In Bos taurus (Bovine), this protein is Calicin (CCIN).